Here is a 604-residue protein sequence, read N- to C-terminus: Elongation factor 4 (604 aa).

A tr-type G domain is found at lysine 10 to serine 191. Residues aspartate 22–threonine 27 and asparagine 138–aspartate 141 contribute to the GTP site.

This sequence belongs to the TRAFAC class translation factor GTPase superfamily. Classic translation factor GTPase family. LepA subfamily.

The protein localises to the cell inner membrane. The enzyme catalyses GTP + H2O = GDP + phosphate + H(+). Functionally, required for accurate and efficient protein synthesis under certain stress conditions. May act as a fidelity factor of the translation reaction, by catalyzing a one-codon backward translocation of tRNAs on improperly translocated ribosomes. Back-translocation proceeds from a post-translocation (POST) complex to a pre-translocation (PRE) complex, thus giving elongation factor G a second chance to translocate the tRNAs correctly. Binds to ribosomes in a GTP-dependent manner. The polypeptide is Elongation factor 4 (Helicobacter acinonychis (strain Sheeba)).